A 420-amino-acid polypeptide reads, in one-letter code: Argininosuccinate synthase (420 aa).

Position 23 to 31 (alanine 23 to serine 31) interacts with ATP. Tyrosine 102 is a binding site for L-citrulline. Residue glycine 132 participates in ATP binding. L-aspartate is bound by residues threonine 134, asparagine 138, and aspartate 139. Asparagine 138 lines the L-citrulline pocket. Residues arginine 142, serine 190, glutamate 274, and tyrosine 286 each contribute to the L-citrulline site.

It belongs to the argininosuccinate synthase family. Type 1 subfamily. As to quaternary structure, homotetramer.

Its subcellular location is the cytoplasm. The catalysed reaction is L-citrulline + L-aspartate + ATP = 2-(N(omega)-L-arginino)succinate + AMP + diphosphate + H(+). It participates in amino-acid biosynthesis; L-arginine biosynthesis; L-arginine from L-ornithine and carbamoyl phosphate: step 2/3. This chain is Argininosuccinate synthase, found in Renibacterium salmoninarum (strain ATCC 33209 / DSM 20767 / JCM 11484 / NBRC 15589 / NCIMB 2235).